The chain runs to 553 residues: HTH-type transcriptional regulator SgrR (553 aa).

Residues 1 to 113 (MSTSRLQQQF…RQMLLSQLGR (113 aa)) enclose the HTH marR-type domain. Positions 26–49 (LQALAEVLNCSRRHVRSLLGKMQH) form a DNA-binding region, H-T-H motif. Residues 163–494 (ELEPDLSHHW…EELHQDIESW (332 aa)) are solute-binding.

Activates the small RNA gene sgrS under glucose-phosphate stress conditions as well as yfdZ. Represses its own transcription under both stress and non-stress conditions. Might act as a sensor of the intracellular accumulation of phosphoglucose by binding these molecules in its C-terminal solute-binding domain. The polypeptide is HTH-type transcriptional regulator SgrR (Yersinia pseudotuberculosis serotype I (strain IP32953)).